The following is a 166-amino-acid chain: V-type proton ATPase subunit c4 (166 aa).

Topologically, residues 1–13 (MASSGFSGDETAP) are lumenal. The helical transmembrane segment at 14–34 (FFGFLGAAAALVFSCMGAAYG) threads the bilayer. Residues 35–56 (TAKSGVGVASMGVMRPELVMKS) lie on the Cytoplasmic side of the membrane. A helical membrane pass occupies residues 57-77 (IVPVVMAGVLGIYGLIIAVII). The Lumenal segment spans residues 78–96 (STGINPKAKSYYLFDGYAH). Residues 97–118 (LSSGLACGLAGLSAGMAIGIVG) traverse the membrane as a helical segment. At 119–130 (DAGVRANAQQPK) the chain is on the cytoplasmic side. The helical transmembrane segment at 131–156 (LFVGMILILIFAEALALYGLIVGIIL) threads the bilayer. The Lumenal segment spans residues 157 to 166 (SSRAGQSRAE).

Belongs to the V-ATPase proteolipid subunit family. In terms of assembly, V-ATPase is a heteromultimeric enzyme composed of a peripheral catalytic V1 complex (components A to H) attached to an integral membrane V0 proton pore complex (components: a, c, c'', d and e). The proteolipid components c and c'' are present as a hexameric ring that forms the proton-conducting pore. Interacts with APD2.

Its subcellular location is the vacuole membrane. Proton-conducting pore forming subunit of the membrane integral V0 complex of vacuolar ATPase. V-ATPase is responsible for acidifying a variety of intracellular compartments in eukaryotic cells. This chain is V-type proton ATPase subunit c4 (VHA-c4), found in Arabidopsis thaliana (Mouse-ear cress).